Reading from the N-terminus, the 602-residue chain is Arginine--tRNA ligase (602 aa).

Residues 138 to 148 (ANPTGPMHVGH) carry the 'HIGH' region motif.

It belongs to the class-I aminoacyl-tRNA synthetase family. In terms of assembly, monomer.

It is found in the cytoplasm. It carries out the reaction tRNA(Arg) + L-arginine + ATP = L-arginyl-tRNA(Arg) + AMP + diphosphate. This is Arginine--tRNA ligase from Gluconobacter oxydans (strain 621H) (Gluconobacter suboxydans).